The following is a 170-amino-acid chain: uncharacterized protein (170 aa).

This is an uncharacterized protein from Myxococcus xanthus.